Reading from the N-terminus, the 394-residue chain is Probable 6-phosphogluconolactonase ARB_02015 (394 aa).

The signal sequence occupies residues 1–21 (MKTVPFLSLLQAGILTSGIVA). N-linked (GlcNAc...) asparagine glycosylation occurs at asparagine 51.

It belongs to the cycloisomerase 2 family.

It is found in the secreted. The enzyme catalyses 6-phospho-D-glucono-1,5-lactone + H2O = 6-phospho-D-gluconate + H(+). Its pathway is carbohydrate degradation; pentose phosphate pathway; D-ribulose 5-phosphate from D-glucose 6-phosphate (oxidative stage): step 2/3. Catalyzes the hydrolysis of 6-phosphogluconolactone to 6-phosphogluconate. The protein is Probable 6-phosphogluconolactonase ARB_02015 of Arthroderma benhamiae (strain ATCC MYA-4681 / CBS 112371) (Trichophyton mentagrophytes).